An 88-amino-acid polypeptide reads, in one-letter code: UPF0250 protein Ssed_3490 (88 aa).

Belongs to the UPF0250 family.

The polypeptide is UPF0250 protein Ssed_3490 (Shewanella sediminis (strain HAW-EB3)).